A 193-amino-acid chain; its full sequence is Protein B4 (193 aa).

3 consecutive transmembrane segments (helical) span residues Phe-15–Phe-35, Cys-36–Val-56, and Leu-160–Ser-180.

It localises to the host membrane. The sequence is that of Protein B4 (B4) from Homo sapiens (Human).